A 364-amino-acid polypeptide reads, in one-letter code: Ribosomal RNA large subunit methyltransferase F (364 aa).

Residues 1 to 52 (MPKPAIKTAAKLAMSSAGKRGKPSTPKSLAKPQTTKPKTASKLKAKHGEQKR) are disordered. Residues 25 to 38 (TPKSLAKPQTTKPK) show a composition bias toward polar residues.

It belongs to the methyltransferase superfamily. METTL16/RlmF family.

It is found in the cytoplasm. The enzyme catalyses adenosine(1618) in 23S rRNA + S-adenosyl-L-methionine = N(6)-methyladenosine(1618) in 23S rRNA + S-adenosyl-L-homocysteine + H(+). Functionally, specifically methylates the adenine in position 1618 of 23S rRNA. In Shewanella sp. (strain ANA-3), this protein is Ribosomal RNA large subunit methyltransferase F.